Consider the following 167-residue polypeptide: Probable membrane-bound hydrogenase subunit mbhJ (167 aa).

[4Fe-4S] cluster-binding residues include Cys35, Cys38, Cys102, and Cys132.

Belongs to the complex I 20 kDa subunit family. In terms of assembly, the membrane-bound hydrogenase complex is composed of MbhK and MbhL, but may also contain MbhJ. [4Fe-4S] cluster serves as cofactor.

The protein localises to the cell membrane. It carries out the reaction H2 + 2 oxidized [2Fe-2S]-[ferredoxin] = 2 reduced [2Fe-2S]-[ferredoxin] + 2 H(+). Its activity is regulated as follows. Inhibited by 0.1 mM Cu(2+). Its function is as follows. Probable subunit of a hydrogen-evolving hydrogenase that utilizes protons both as a substrate for hydrogen production and proton translocation. Acts by coupling the redox reaction via ferredoxin and iron-sulfur (Fe-S) clusters to proton translocation across the membrane, thereby conserving the redox energy in a proton gradient. This is Probable membrane-bound hydrogenase subunit mbhJ from Pyrococcus furiosus (strain ATCC 43587 / DSM 3638 / JCM 8422 / Vc1).